The following is a 481-amino-acid chain: Long chain base biosynthesis protein 1b (481 aa).

A helical transmembrane segment spans residues 32 to 52; that stretch reads FGIHIDGHLVVEGLLIAAILF.

This sequence belongs to the class-II pyridoxal-phosphate-dependent aminotransferase family. In terms of assembly, heterodimer with LCB2. Component of the serine palmitoyltransferase (SPT) complex, composed of LCB1 and LCB2. Pyridoxal 5'-phosphate serves as cofactor.

It is found in the endoplasmic reticulum membrane. It catalyses the reaction L-serine + hexadecanoyl-CoA + H(+) = 3-oxosphinganine + CO2 + CoA. Its pathway is lipid metabolism; sphingolipid metabolism. Serine palmitoyltransferase (SPT). The heterodimer formed with LCB2 constitutes the catalytic core. The sequence is that of Long chain base biosynthesis protein 1b from Oryza sativa subsp. japonica (Rice).